The primary structure comprises 1451 residues: Protein clueless (1451 aa).

Disordered stretches follow at residues 1–101 and 264–286; these read MALE…EYAA and KKTR…VSEP. Residues 9-53 are compositionally biased toward low complexity; sequence NSNATATGDATATKASSKAKENNNTAGGKKNLNPIPSQQNSNQNL. Residues 66-75 show a composition bias toward basic residues; that stretch reads GKKKGKKNRN. S270 is modified (phosphoserine). The 243-residue stretch at 424–666 folds into the Clu domain; it reads RAEDAFSSKL…RTFPPDVNFL (243 aa). 3 disordered regions span residues 722 to 775, 961 to 1012, and 1413 to 1451; these read AKKQ…ESKT, AVSS…SSVS, and ANNN…ATSS. The segment covering 748 to 758 has biased composition (basic and acidic residues); the sequence is GADKTDVKEEK. Over residues 969-984 the composition is skewed to basic residues; sequence KKRGNGGKHNKHKSSK. A compositionally biased stretch (low complexity) spans 989 to 1010; the sequence is QQQQQTTGNQNGSSSGTSNGSS.

The protein belongs to the CLU family.

It is found in the cytoplasm. Its function is as follows. mRNA-binding protein involved in proper cytoplasmic distribution of mitochondria. This chain is Protein clueless, found in Drosophila yakuba (Fruit fly).